The sequence spans 396 residues: Zinc metalloproteinase nas-19 (396 aa).

The first 20 residues, 1–20 (MVRLIHLIGAIILLFSYAYC), serve as a signal peptide directing secretion. Residues 38-231 (RVKRQFERLG…YKINQYYGCW (194 aa)) form the Peptidase M12A domain. A glycan (N-linked (GlcNAc...) asparagine) is linked at N79. 4 disulfide bridges follow: C82/C230, C105/C130, C232/C252, and C254/C263. Position 138 (H138) interacts with Zn(2+). E139 is an active-site residue. Positions 142 and 148 each coordinate Zn(2+). Residues 225–264 (NQYYGCWCSKQLECKNGGYTSPSDCSRCNCPKGFFGNLCD) form the EGF-like domain. N310 carries N-linked (GlcNAc...) asparagine glycosylation.

Zn(2+) is required as a cofactor.

The protein resides in the secreted. In terms of biological role, metalloprotease. In Caenorhabditis elegans, this protein is Zinc metalloproteinase nas-19 (nas-19).